A 111-amino-acid polypeptide reads, in one-letter code: Large ribosomal subunit protein uL23 (111 aa).

This sequence belongs to the universal ribosomal protein uL23 family. As to quaternary structure, part of the 50S ribosomal subunit. Contacts protein L29, and trigger factor when it is bound to the ribosome.

In terms of biological role, one of the early assembly proteins it binds 23S rRNA. One of the proteins that surrounds the polypeptide exit tunnel on the outside of the ribosome. Forms the main docking site for trigger factor binding to the ribosome. This Chlamydia caviae (strain ATCC VR-813 / DSM 19441 / 03DC25 / GPIC) (Chlamydophila caviae) protein is Large ribosomal subunit protein uL23.